The following is a 358-amino-acid chain: Dynein axonemal assembly factor 10 (358 aa).

WD repeat units lie at residues 64–106, 116–155, 163–206, 208–250, 258–298, and 320–358; these read EKPK…TPVY, NCID…TPVA, ETKR…VRWE, NIKN…PSKG, AHKS…QRSR, and LSTQ…LNKL.

Interacts with PIH1D1; the interaction associates DNAAF10 with the R2TP complex. Interacts with several dynein axonemal assembly factors.

The protein localises to the dynein axonemal particle. Its function is as follows. Key assembly factor specifically required for the stability of axonemal dynein heavy chains in cytoplasm. In Xenopus tropicalis (Western clawed frog), this protein is Dynein axonemal assembly factor 10 (dnaaf10).